A 44-amino-acid polypeptide reads, in one-letter code: Somatoliberin (44 aa).

The residue at position 44 (Leu44) is a Leucine amide.

The protein belongs to the glucagon family.

Its subcellular location is the secreted. In terms of biological role, GRF is released by the hypothalamus and acts on the adenohypophyse to stimulate the secretion of growth hormone. This is Somatoliberin (GHRH) from Sus scrofa (Pig).